Here is a 125-residue protein sequence, read N- to C-terminus: UPF0738 protein GTNG_0708 (125 aa).

It belongs to the UPF0738 family.

The protein is UPF0738 protein GTNG_0708 of Geobacillus thermodenitrificans (strain NG80-2).